A 175-amino-acid chain; its full sequence is Small ribosomal subunit protein uS9 (175 aa).

This sequence belongs to the universal ribosomal protein uS9 family.

The sequence is that of Small ribosomal subunit protein uS9 from Streptomyces griseus subsp. griseus (strain JCM 4626 / CBS 651.72 / NBRC 13350 / KCC S-0626 / ISP 5235).